The following is a 720-amino-acid chain: Methionine--tRNA ligase (720 aa).

Residues 27–37 (PYANGQIHIGH) carry the 'HIGH' region motif. The Zn(2+) site is built by cysteine 158, cysteine 161, cysteine 171, and cysteine 174. The short motif at 348–352 (KMSKS) is the 'KMSKS' region element. Lysine 351 provides a ligand contact to ATP. In terms of domain architecture, tRNA-binding spans 614 to 720 (DFAKIDLRIA…SGAKPGMRVK (107 aa)).

Belongs to the class-I aminoacyl-tRNA synthetase family. MetG type 1 subfamily. In terms of assembly, homodimer. Zn(2+) serves as cofactor.

Its subcellular location is the cytoplasm. The enzyme catalyses tRNA(Met) + L-methionine + ATP = L-methionyl-tRNA(Met) + AMP + diphosphate. In terms of biological role, is required not only for elongation of protein synthesis but also for the initiation of all mRNA translation through initiator tRNA(fMet) aminoacylation. This Burkholderia lata (strain ATCC 17760 / DSM 23089 / LMG 22485 / NCIMB 9086 / R18194 / 383) protein is Methionine--tRNA ligase.